The chain runs to 545 residues: CTP synthase (545 aa).

An amidoligase domain region spans residues 1–265 (MTKYIFITGG…DEIVVKKLSL (265 aa)). Residue serine 13 participates in CTP binding. Serine 13 is a binding site for UTP. Residues 14–19 (SLGKGI) and aspartate 71 each bind ATP. 2 residues coordinate Mg(2+): aspartate 71 and glutamate 139. Residues 146-148 (DIE), 186-191 (KTKPTQ), and lysine 222 contribute to the CTP site. UTP contacts are provided by residues 186–191 (KTKPTQ) and lysine 222. Residues 290 to 541 (KIAMVGKYTE…VFAARIHHQE (252 aa)) enclose the Glutamine amidotransferase type-1 domain. Glycine 351 is a binding site for L-glutamine. The active-site Nucleophile; for glutamine hydrolysis is cysteine 378. L-glutamine-binding positions include 379 to 382 (LGMQ), glutamate 402, and arginine 469. Active-site residues include histidine 514 and glutamate 516.

This sequence belongs to the CTP synthase family. As to quaternary structure, homotetramer.

It carries out the reaction UTP + L-glutamine + ATP + H2O = CTP + L-glutamate + ADP + phosphate + 2 H(+). The catalysed reaction is L-glutamine + H2O = L-glutamate + NH4(+). It catalyses the reaction UTP + NH4(+) + ATP = CTP + ADP + phosphate + 2 H(+). It functions in the pathway pyrimidine metabolism; CTP biosynthesis via de novo pathway; CTP from UDP: step 2/2. With respect to regulation, allosterically activated by GTP, when glutamine is the substrate; GTP has no effect on the reaction when ammonia is the substrate. The allosteric effector GTP functions by stabilizing the protein conformation that binds the tetrahedral intermediate(s) formed during glutamine hydrolysis. Inhibited by the product CTP, via allosteric rather than competitive inhibition. Its function is as follows. Catalyzes the ATP-dependent amination of UTP to CTP with either L-glutamine or ammonia as the source of nitrogen. Regulates intracellular CTP levels through interactions with the four ribonucleotide triphosphates. The sequence is that of CTP synthase from Legionella pneumophila (strain Lens).